A 191-amino-acid polypeptide reads, in one-letter code: 3-isopropylmalate dehydratase small subunit (191 aa).

Belongs to the LeuD family. LeuD type 1 subfamily. As to quaternary structure, heterodimer of LeuC and LeuD.

It carries out the reaction (2R,3S)-3-isopropylmalate = (2S)-2-isopropylmalate. Its pathway is amino-acid biosynthesis; L-leucine biosynthesis; L-leucine from 3-methyl-2-oxobutanoate: step 2/4. In terms of biological role, catalyzes the isomerization between 2-isopropylmalate and 3-isopropylmalate, via the formation of 2-isopropylmaleate. The protein is 3-isopropylmalate dehydratase small subunit of Lactococcus lactis subsp. cremoris (strain MG1363).